The chain runs to 932 residues: MAPPQRHPQRSEQVLLLTLLGTLWGAAAAQIRYSIPEELEKGSFVGNIVKDLGLEPQELAEHGVRIVSRGRMQLFSLNPRNGSLVTAGRIDREELCAQSPRCLVSFNILVEDKLNLYPVEVEIVDINDNTPRFLKEELEVKILENAAPSSRFPLMEVYDPDVGMNSLQGFKLSGNSHFSVDVQSEAHGPKYPELVLEGTLDREGEAVYRLVLTAMDGGDPVRSSVAQILVTVLDVNDNTPMFTQPVYRVSVPENLPVGTPVLAVTATDQDEGVHGEVTYSFVKITEKISQIFCLNVLTGEISTSANLDYEDSSFYELGVEARDGPGLRDRAKVLITILDVNDNVPEVVVTSGSRTIAESAPPGTVIALFQVFDRDSGLNGLVTCSIPRSLPFELEKSVGNYYRLVTNAALDREEVFLYNITVTATDKGTPPLSTETIISLNVADTNDNPPTFPHSSYSVYVLENNPRGASIFSVNALDPDVDQNAQVSYSLAEDTLQGAPLSSYVSINSDTGILYALRSFDYEQLRDLQLWVTASDSGDPPLSSNVSLSLFVLDQNDNAPEILYPALPTDGSTGVELAPRSAEPGYLVTKVVAVDRDSGQNAWLSYRLLKASEPGLFSVGLHTGEVRTARALLDRDALKQSLVVAVQDHGQPPLSATVTLTVAVADRIPDILADLGSLEPSAKPNDSDLTLYLVVAVAAVSCVFLAFVIVLLALRLQRWHKSRLLQASGGGLASMPGSHFVGVEGVRAFLQTYSHEVSLTADSRKSHLIFPQPNYADTLINQESYEKSEPLLITQDLLETKGEPRQLQQAPPNTDWRFSQAQRPGTSGSQNGDDTGTWPNNQFDTEMLQAMILASASEAADGSSTLGGGAGTMGLSARYGPQFTLQHVPDYRQNVYIPGSNATLTNAAGKRDGKAPAGGNGNKKKSGKKEKK.

The N-terminal stretch at 1–29 (MAPPQRHPQRSEQVLLLTLLGTLWGAAAA) is a signal peptide. 6 Cadherin domains span residues 30-133 (QIRY…TPRF), 134-242 (LKEE…TPMF), 243-347 (TQPV…VPEV), 348-452 (VVTS…PPTF), 453-562 (PHSS…APEI), and 570-682 (DGST…EPSA). The Extracellular segment spans residues 30 to 692 (QIRYSIPEEL…KPNDSDLTLY (663 aa)). Asn81 carries N-linked (GlcNAc...) asparagine glycosylation. N-linked (GlcNAc...) asparagine glycans are attached at residues Asn419 and Asn545. N-linked (GlcNAc...) asparagine glycosylation occurs at Asn685. The chain crosses the membrane as a helical span at residues 693-713 (LVVAVAAVSCVFLAFVIVLLA). Topologically, residues 714 to 932 (LRLQRWHKSR…KKKSGKKEKK (219 aa)) are cytoplasmic. Disordered regions lie at residues 804-841 (PRQL…WPNN) and 902-932 (ATLT…KEKK). Residues 806–841 (QLQQAPPNTDWRFSQAQRPGTSGSQNGDDTGTWPNN) are compositionally biased toward polar residues. The segment covering 922–932 (NKKKSGKKEKK) has biased composition (basic residues).

Its subcellular location is the cell membrane. Functionally, potential calcium-dependent cell-adhesion protein. May be involved in the establishment and maintenance of specific neuronal connections in the brain. This chain is Protocadherin gamma-A6 (PCDHGA6), found in Homo sapiens (Human).